The sequence spans 628 residues: DNA-directed RNA polymerase subunit gamma (628 aa).

Zn(2+)-binding residues include Cys-71, Cys-73, Cys-86, and Cys-89. Positions 467, 469, and 471 each coordinate Mg(2+).

Belongs to the RNA polymerase beta' chain family. RpoC1 subfamily. In cyanobacteria the RNAP catalytic core is composed of 2 alpha, 1 beta, 1 beta', 1 gamma and 1 omega subunit. When a sigma factor is associated with the core the holoenzyme is formed, which can initiate transcription. Mg(2+) is required as a cofactor. It depends on Zn(2+) as a cofactor.

It catalyses the reaction RNA(n) + a ribonucleoside 5'-triphosphate = RNA(n+1) + diphosphate. Functionally, DNA-dependent RNA polymerase catalyzes the transcription of DNA into RNA using the four ribonucleoside triphosphates as substrates. In Crocosphaera subtropica (strain ATCC 51142 / BH68) (Cyanothece sp. (strain ATCC 51142)), this protein is DNA-directed RNA polymerase subunit gamma.